The following is a 250-amino-acid chain: ATP synthase subunit a (250 aa).

6 consecutive transmembrane segments (helical) span residues 29–49 (ASLF…FATS), 84–104 (FFPL…LGMF), 114–134 (IIVT…YGFY), 143–163 (VFVP…IEII), 193–213 (FVAS…LPLI), and 216–236 (VALT…FAVL).

The protein belongs to the ATPase A chain family. As to quaternary structure, F-type ATPases have 2 components, CF(1) - the catalytic core - and CF(0) - the membrane proton channel. CF(1) has five subunits: alpha(3), beta(3), gamma(1), delta(1), epsilon(1). CF(0) has three main subunits: a(1), b(2) and c(9-12). The alpha and beta chains form an alternating ring which encloses part of the gamma chain. CF(1) is attached to CF(0) by a central stalk formed by the gamma and epsilon chains, while a peripheral stalk is formed by the delta and b chains.

Its subcellular location is the cell inner membrane. Key component of the proton channel; it plays a direct role in the translocation of protons across the membrane. This chain is ATP synthase subunit a, found in Rhizobium johnstonii (strain DSM 114642 / LMG 32736 / 3841) (Rhizobium leguminosarum bv. viciae).